The following is a 489-amino-acid chain: Long chain base biosynthesis protein 2a (489 aa).

The helical transmembrane segment at Ile-2 to Phe-22 threads the bilayer. Residue Lys-311 is modified to N6-(pyridoxal phosphate)lysine.

The protein belongs to the class-II pyridoxal-phosphate-dependent aminotransferase family. As to quaternary structure, heterodimer with LCB1. Component of the serine palmitoyltransferase (SPT) complex, composed of LCB1 and LCB2 (LCB2a or LCB2b). Pyridoxal 5'-phosphate serves as cofactor. As to expression, ubiquitous. Detected in leaves, roots, stems, flowers and at a lower level in mature seeds.

It localises to the endoplasmic reticulum membrane. The catalysed reaction is L-serine + hexadecanoyl-CoA + H(+) = 3-oxosphinganine + CO2 + CoA. It participates in lipid metabolism; sphingolipid metabolism. Its function is as follows. Serine palmitoyltransferase (SPT). The heterodimer formed with LCB1 constitutes the catalytic core. Involved in the regulation of the programmed cell death (PCD) signaling pathway. Plays an important role during male gametogenesis and embryogenesis. This Arabidopsis thaliana (Mouse-ear cress) protein is Long chain base biosynthesis protein 2a (LCB2a).